The sequence spans 929 residues: ATP-dependent RNA helicase DDX42 (929 aa).

Lys-5 bears the N6-acetyllysine mark. Residue Arg-12 is modified to Omega-N-methylarginine. Disordered stretches follow at residues 25-119 (KKEE…LEAF) and 182-203 (EYDSDGNPIAPSKKIIDPLPPI). Over residues 35–52 (SHSAFGAASSSSGFGKSA) the composition is skewed to low complexity. Residue Ser-58 is modified to Phosphoserine. A compositionally biased stretch (acidic residues) spans 70–84 (DEENAYFEDEEEDSS). 4 positions are modified to phosphoserine: Ser-96, Ser-104, Ser-109, and Ser-111. A coiled-coil region spans residues 116 to 157 (LEAFMAEVEDQAARDMKRLEEKDKERKNVKGIRDDIEEEDDQ). Residue Ser-185 is modified to Phosphoserine. The short motif at 253–281 (SSFAHFGFDEQLMHQIRKSEYTQPTPIQC) is the Q motif element. Positions 284–459 (VPVALSGRDM…RDILIDPIRV (176 aa)) constitute a Helicase ATP-binding domain. An ATP-binding site is contributed by 297-304 (AKTGSGKT). The DEAD box signature appears at 407–410 (DEAD). The 146-residue stretch at 487–632 (WLTRRLVEFT…HVSKELLDLA (146 aa)) folds into the Helicase C-terminal domain. Disordered regions lie at residues 662–682 (ERPGLGSENSDRGNNNNVMSN) and 723–929 (GTSS…RWDS). Residues 723 to 737 (GTSSAGASGWTSAGS) show a composition bias toward low complexity. 2 stretches are compositionally biased toward polar residues: residues 738 to 777 (LNSVPTNSAQQGHNSPDNPMTSSTKNIPGFNNSGNISSAP) and 787 to 798 (GVNNTASGNNSR). The interval 739-828 (NSVPTNSAQQ…RHSHGDGGNR (90 aa)) is necessary for interaction with TP53BP2. The segment covering 821–911 (SHGDGGNRHG…KVDSKTDKTP (91 aa)) has biased composition (basic and acidic residues). A Glycyl lysine isopeptide (Lys-Gly) (interchain with G-Cter in SUMO2) cross-link involves residue Lys-894.

The protein belongs to the DEAD box helicase family. DDX42 subfamily. In terms of assembly, transient component of the SF3B subcomplex of the 17S U2 SnRNP complex. Interacts (via the C-terminus) with TP53BP2; the interaction is not inhibitied by TP53BP2 ubiquitination and is independent of p53/TP53.

It is found in the cytoplasm. Its subcellular location is the nucleus. It catalyses the reaction ATP + H2O = ADP + phosphate + H(+). Functionally, ATP-dependent RNA helicase that binds to partially double-stranded RNAs (dsRNAs) in order to unwind RNA secondary structures. Unwinding is promoted in the presence of single-strand binding proteins. Also mediates RNA duplex formation thereby displacing the single-strand RNA binding protein. ATP and ADP modulate its activity: ATP binding and hydrolysis by DDX42 triggers RNA strand separation, whereas the ADP-bound form of the protein triggers annealing of complementary RNA strands. Required for assembly of the 17S U2 SnRNP complex of the spliceosome, a large ribonucleoprotein complex that removes introns from transcribed pre-mRNAs: DDX42 associates transiently with the SF3B subcomplex of the 17S U2 SnRNP complex and is released after fulfilling its role in the assembly of 17S U2 SnRNP. Involved in the survival of cells by interacting with TP53BP2 and thereby counteracting the apoptosis-stimulating activity of TP53BP2. Relocalizes TP53BP2 to the cytoplasm. This Mus musculus (Mouse) protein is ATP-dependent RNA helicase DDX42 (Ddx42).